Consider the following 264-residue polypeptide: 4-hydroxy-tetrahydrodipicolinate reductase (264 aa).

Position 10-15 (glycine 10–glutamine 15) interacts with NAD(+). An NADP(+)-binding site is contributed by arginine 37. Residues glycine 99–threonine 101 and serine 121–leucine 124 each bind NAD(+). Histidine 153 functions as the Proton donor/acceptor in the catalytic mechanism. Residue histidine 154 participates in (S)-2,3,4,5-tetrahydrodipicolinate binding. Lysine 157 acts as the Proton donor in catalysis. Glycine 163–threonine 164 contacts (S)-2,3,4,5-tetrahydrodipicolinate.

Belongs to the DapB family.

It localises to the cytoplasm. It carries out the reaction (S)-2,3,4,5-tetrahydrodipicolinate + NAD(+) + H2O = (2S,4S)-4-hydroxy-2,3,4,5-tetrahydrodipicolinate + NADH + H(+). It catalyses the reaction (S)-2,3,4,5-tetrahydrodipicolinate + NADP(+) + H2O = (2S,4S)-4-hydroxy-2,3,4,5-tetrahydrodipicolinate + NADPH + H(+). The protein operates within amino-acid biosynthesis; L-lysine biosynthesis via DAP pathway; (S)-tetrahydrodipicolinate from L-aspartate: step 4/4. Functionally, catalyzes the conversion of 4-hydroxy-tetrahydrodipicolinate (HTPA) to tetrahydrodipicolinate. The polypeptide is 4-hydroxy-tetrahydrodipicolinate reductase (Ehrlichia ruminantium (strain Gardel)).